We begin with the raw amino-acid sequence, 599 residues long: MEQYEVLEQIGKGAFGSALLVRHKVEKKKYVLKKIRLARQTDRTRRSAHQEMQLIATVRNPFIVEYKDSWVEKGCYVCIIIGYCEGGDMAEAIKRATGDHFSEEKLCKWLVQLLMALDYLHANHILHRDVKCSNIFLTRDQSIRLGDFGLAKILTSDDLASSVVGTPSYMCPELLADIPYGTKSDIWSLGCCIYEMTALRPAFKAFDMQALISKITKSIVSPLPTRYSGAFRGLIKSMLRKSPEHRPSAAELLKHPHLQPYVLQVHLKSSPARNIIPSHQSPIDKVKKMTFPTESMCRSKGRRNSLGNERIVTFSKPSPERKFTSSIQSIKDYSTTRSVKDLSIDVSLVEEVSSKTTFTTRTSSIVKTPKRTPSKTITTPQLEPPKVSYNRVNRSELLSRTPVNRSARVIRRASLPLPLPSSETPKRGVSSISILEQLESPDVSVNSPRIDRIAEFPLASSEDPPFLKLHGRRSPTPTPQHCVIDQSITKDKCMVEAFHIIDVDDDDGRSDSSSGRNNAAAAASSRAGSSESTRQRRFDTSSYQQRAEALEGLLEFSAQLLQQERYDELGVLLKPFGPEKVSPRETAIWLTKSFKETGL.

The region spanning 4 to 258 (YEVLEQIGKG…AAELLKHPHL (255 aa)) is the Protein kinase domain. Residues 10–18 (IGKGAFGSA) and K33 each bind ATP. D129 serves as the catalytic Proton acceptor. 3 disordered regions span residues 364-386 (SIVK…EPPK), 461-482 (SEDP…PQHC), and 504-542 (DDDD…DTSS). Positions 511-530 (DSSSGRNNAAAAASSRAGSS) are enriched in low complexity.

This sequence belongs to the protein kinase superfamily. NEK Ser/Thr protein kinase family. NIMA subfamily. Expressed in anthers, pistils and leaves.

It carries out the reaction L-seryl-[protein] + ATP = O-phospho-L-seryl-[protein] + ADP + H(+). The catalysed reaction is L-threonyl-[protein] + ATP = O-phospho-L-threonyl-[protein] + ADP + H(+). Functionally, may be involved in plant development processes. The protein is Serine/threonine-protein kinase Nek1 of Oryza sativa subsp. japonica (Rice).